A 383-amino-acid chain; its full sequence is Acetylornithine deacetylase (383 aa).

His80 serves as a coordination point for Zn(2+). The active site involves Asp82. Asp112 serves as a coordination point for Zn(2+). Glu144 is a catalytic residue. Residues Glu145, Glu169, and His355 each contribute to the Zn(2+) site.

It belongs to the peptidase M20A family. ArgE subfamily. In terms of assembly, homodimer. Zn(2+) serves as cofactor. The cofactor is Co(2+). Requires glutathione as cofactor.

Its subcellular location is the cytoplasm. The catalysed reaction is N(2)-acetyl-L-ornithine + H2O = L-ornithine + acetate. Its pathway is amino-acid biosynthesis; L-arginine biosynthesis; L-ornithine from N(2)-acetyl-L-ornithine (linear): step 1/1. Functionally, catalyzes the hydrolysis of the amide bond of N(2)-acetylated L-amino acids. Cleaves the acetyl group from N-acetyl-L-ornithine to form L-ornithine, an intermediate in L-arginine biosynthesis pathway, and a branchpoint in the synthesis of polyamines. The chain is Acetylornithine deacetylase from Pectobacterium carotovorum subsp. carotovorum (strain PC1).